The primary structure comprises 382 residues: Glutamyl-tRNA reductase (382 aa).

Substrate-binding positions include 38-41 (TCNR), S85, 90-92 (ENQ), and Q96. C39 acts as the Nucleophile in catalysis. 164–169 (GAGEMG) contacts NADP(+).

The protein belongs to the glutamyl-tRNA reductase family. As to quaternary structure, homodimer.

The enzyme catalyses (S)-4-amino-5-oxopentanoate + tRNA(Glu) + NADP(+) = L-glutamyl-tRNA(Glu) + NADPH + H(+). It participates in porphyrin-containing compound metabolism; protoporphyrin-IX biosynthesis; 5-aminolevulinate from L-glutamyl-tRNA(Glu): step 1/2. Its function is as follows. Catalyzes the NADPH-dependent reduction of glutamyl-tRNA(Glu) to glutamate 1-semialdehyde (GSA). The protein is Glutamyl-tRNA reductase of Methanococcus maripaludis (strain C5 / ATCC BAA-1333).